Reading from the N-terminus, the 116-residue chain is Flagellar transcriptional regulator FlhD (116 aa).

This sequence belongs to the FlhD family. Homodimer; disulfide-linked. Forms a heterohexamer composed of two FlhC and four FlhD subunits. Each FlhC binds a FlhD dimer, forming a heterotrimer, and a hexamer assembles by dimerization of two heterotrimers.

The protein localises to the cytoplasm. Functions in complex with FlhC as a master transcriptional regulator that regulates transcription of several flagellar and non-flagellar operons by binding to their promoter region. Activates expression of class 2 flagellar genes, including fliA, which is a flagellum-specific sigma factor that turns on the class 3 genes. Also regulates genes whose products function in a variety of physiological pathways. This chain is Flagellar transcriptional regulator FlhD, found in Salmonella arizonae (strain ATCC BAA-731 / CDC346-86 / RSK2980).